Reading from the N-terminus, the 274-residue chain is Proteasome subunit beta type-5-A (274 aa).

A propeptide spans 1-57 (MKLDTSGFETSMPMIGFGSSSDMLDELSSVPSFDLPRTKEFDGFQKKAKDMLKHAKG) (removed in mature form). Catalysis depends on Thr-58, which acts as the Nucleophile.

Belongs to the peptidase T1B family. Component of the 20S core complex of the 26S proteasome. The 26S proteasome is composed of a core protease (CP), known as the 20S proteasome, capped at one or both ends by the 19S regulatory particle (RP/PA700). The 20S proteasome core is composed of 28 subunits that are arranged in four stacked rings, resulting in a barrel-shaped structure. The two end rings are each formed by seven alpha subunits, and the two central rings are each formed by seven beta subunits. The catalytic chamber with the active sites is on the inside of the barrel. As to expression, ubiquitous low levels, higher expression in siliques and flowers.

It localises to the cytoplasm. The protein localises to the nucleus. The catalysed reaction is Cleavage of peptide bonds with very broad specificity.. The proteasome is a multicatalytic proteinase complex which is characterized by its ability to cleave peptides with Arg, Phe, Tyr, Leu, and Glu adjacent to the leaving group at neutral or slightly basic pH. The proteasome has an ATP-dependent proteolytic activity. This chain is Proteasome subunit beta type-5-A (PBE1), found in Arabidopsis thaliana (Mouse-ear cress).